We begin with the raw amino-acid sequence, 446 residues long: Maltoporin (446 aa).

Residues 1–25 (MMITLRKLPLAVAVAAGVMSAQAMA) form the signal peptide.

It belongs to the porin LamB (TC 1.B.3) family. In terms of assembly, homotrimer formed of three 18-stranded antiparallel beta-barrels, containing three independent channels.

It is found in the cell outer membrane. It carries out the reaction beta-maltose(in) = beta-maltose(out). Involved in the transport of maltose and maltodextrins. In Escherichia coli O8 (strain IAI1), this protein is Maltoporin.